The primary structure comprises 215 residues: LysM and putative peptidoglycan-binding domain-containing protein 2 (215 aa).

The interval 1-40 (MADSSPALSLREGGPRAPRPSAPSPPPRSRSGSESEEAEL) is disordered. Ala-2 carries the N-acetylalanine modification. Residues Ser-5, Ser-24, Ser-33, and Ser-57 each carry the phosphoserine modification. A compositionally biased stretch (pro residues) spans 17-28 (APRPSAPSPPPR). The 45-residue stretch at 71 to 115 (VEHRVRAGDTLQGIALKYGVTMEQIKRANKLFTNDCIFLKKTLNI) folds into the LysM domain. 2 disordered regions span residues 132–175 (DSPE…EEVS) and 193–215 (AAKK…LYHS). A compositionally biased stretch (basic and acidic residues) spans 196-205 (KLKEESRDEE).

In Homo sapiens (Human), this protein is LysM and putative peptidoglycan-binding domain-containing protein 2 (LYSMD2).